A 278-amino-acid chain; its full sequence is Large ribosomal subunit protein uL2 (278 aa).

The tract at residues 222 to 278 (GVVMNPIDHPHGGGEGRTSGGRHPVTPWGKPTKGKKTRSNKSTNKFILISRHKRKKK) is disordered.

It belongs to the universal ribosomal protein uL2 family. Part of the 50S ribosomal subunit. Forms a bridge to the 30S subunit in the 70S ribosome.

Functionally, one of the primary rRNA binding proteins. Required for association of the 30S and 50S subunits to form the 70S ribosome, for tRNA binding and peptide bond formation. It has been suggested to have peptidyltransferase activity; this is somewhat controversial. Makes several contacts with the 16S rRNA in the 70S ribosome. This Afipia carboxidovorans (strain ATCC 49405 / DSM 1227 / KCTC 32145 / OM5) (Oligotropha carboxidovorans) protein is Large ribosomal subunit protein uL2.